Consider the following 296-residue polypeptide: Glycine--tRNA ligase alpha subunit (296 aa).

It belongs to the class-II aminoacyl-tRNA synthetase family. As to quaternary structure, tetramer of two alpha and two beta subunits.

It is found in the cytoplasm. It carries out the reaction tRNA(Gly) + glycine + ATP = glycyl-tRNA(Gly) + AMP + diphosphate. This is Glycine--tRNA ligase alpha subunit from Listeria welshimeri serovar 6b (strain ATCC 35897 / DSM 20650 / CCUG 15529 / CIP 8149 / NCTC 11857 / SLCC 5334 / V8).